The primary structure comprises 88 residues: DNA-directed RNA polymerase subunit omega (88 aa).

It belongs to the RNA polymerase subunit omega family. The RNAP catalytic core consists of 2 alpha, 1 beta, 1 beta' and 1 omega subunit. When a sigma factor is associated with the core the holoenzyme is formed, which can initiate transcription.

It catalyses the reaction RNA(n) + a ribonucleoside 5'-triphosphate = RNA(n+1) + diphosphate. Promotes RNA polymerase assembly. Latches the N- and C-terminal regions of the beta' subunit thereby facilitating its interaction with the beta and alpha subunits. The chain is DNA-directed RNA polymerase subunit omega from Actinobacillus succinogenes (strain ATCC 55618 / DSM 22257 / CCUG 43843 / 130Z).